Reading from the N-terminus, the 156-residue chain is Endogenous retrovirus group K member 7 Pro protein (156 aa).

A Peptidase A2 domain is found at 21–96 (FEGLVDTGAD…IPLNLWGRDL (76 aa)). Residue D26 is part of the active site. A G-patch domain is found at 111-156 (YSPTSQKIMTKMGYIPGKGLGKNEDGIKVPVEAKINQEREGIGYPF).

This sequence belongs to the peptidase A2 family. HERV class-II K(HML-2) subfamily. Active as a homodimer. Autoproteolytically processed at the N-terminus. Expected C-terminal autoprocessing not detected. The sequence shown is that of the processed Pro protein.

It catalyses the reaction Processing at the authentic HIV-1 PR recognition site and release of the mature p17 matrix and the p24 capsid protein, as a result of the cleavage of the -SQNY-|-PIVQ- cleavage site.. Functionally, retroviral proteases have roles in processing of the primary translation products and the maturation of the viral particle. Endogenous Pro proteins may have kept, lost or modified their original function during evolution. This endogenous protein has retained most of the characteristics of retroviral proteases. The sequence is that of Endogenous retrovirus group K member 7 Pro protein (ERVK-7) from Homo sapiens (Human).